Consider the following 487-residue polypeptide: MDYIVGFVSISLVALLYFLLFKPKHTNLPPSPPAWPIVGHLPDLISKNSPPFLDYMSNIAQKYGPLIHLKFGLHSSIFASTKEAAMEVLQTNDKVLSGRQPLPCFRIKPHIDYSILWSDSNSYWKKGRKILHTEIFSQKMLQAQEKNRERVAGNLVNFIMTKVGDVVELRSWLFGCALNVLGHVVFSKDVFEYSDQSDEVGMDKLIHGMLMTGGDFDVASYFPVLARFDLHGLKRKMDEQFKLLIKIWEGEVLARRANRNPEPKDMLDVLIANDFNEHQINAMFMETFGPGSDTNSNIIEWALAQLIKNPDKLAKLREELDRVVGRSSTVKESHFSELPYLQACVKETMRLYPPISIMIPHRCMETCQVMGYTIPKGMDVHVNAHAIGRDPKDWKDPLKFQPERFLDSDIEYNGKQFQFIPFGSGRRICPGRPLAVRIIPLVLASLVHAFGWELPDGVPNEKLDMEELFTLSLCMAKPLRVIPKVRI.

Position 429 (Cys429) interacts with heme.

The protein belongs to the cytochrome P450 family. Heme is required as a cofactor.

It localises to the endoplasmic reticulum membrane. Its subcellular location is the microsome membrane. It catalyses the reaction (R)-N-methylcoclaurine + (S)-N-methylcoclaurine + reduced [NADPH--hemoprotein reductase] + O2 = berbamunine + oxidized [NADPH--hemoprotein reductase] + 2 H2O + H(+). It functions in the pathway alkaloid biosynthesis; berbamunine biosynthesis; berbamunine from (R)-N-methylcoclaurine and (S)-N-methylcoclaurine: step 1/1. Functionally, forms the bisbenzylisoquinoline alkaloid berbamunine by phenol oxidation of N-methylcoclaurine without the incorporation of oxygen into the product. Oxidatively couples either two molecules of (R)-N-methylcoclaurine to form the (R,R) dimer guattegaumerine or one molecule each of (R)- and (S)-N-methylcoclaurine to form the (R,S) dimer berbamunine. In Berberis stolonifera (Barberry), this protein is Berbamunine synthase (CYP80A1).